A 263-amino-acid chain; its full sequence is MTRFVGCIDLHDGKVKQIVGGTLSSKPDGEAPVTNFVSDKSPSHYAHLYASNDVQGSHVIRLGQSNDEAALMALQAAPGFLQLGGGVTKDNCQYWLQWASKVIVTSALFDSDGSFQLQRLREISGLCGRARLVVDLSCRRASDGASWTVMMNKWQTPTTLALNEETLALLSEYCSEFLIHAADVEGLCRGIDEELVAQLGLWAAQLRGDVRVVYAGGANSVADLGLVKRLSGGRVDLTYGSALDIFGGSLVRFQDCCAWNRQQ.

Belongs to the HisA/HisF family.

The protein localises to the cytoplasm. The catalysed reaction is 1-(5-phospho-beta-D-ribosyl)-5-[(5-phospho-beta-D-ribosylamino)methylideneamino]imidazole-4-carboxamide = 5-[(5-phospho-1-deoxy-D-ribulos-1-ylimino)methylamino]-1-(5-phospho-beta-D-ribosyl)imidazole-4-carboxamide. Its pathway is amino-acid biosynthesis; L-histidine biosynthesis; L-histidine from 5-phospho-alpha-D-ribose 1-diphosphate: step 4/9. This is 1-(5-phosphoribosyl)-5-[(5-phosphoribosylamino)methylideneamino] imidazole-4-carboxamide isomerase (HIS6) from Eremothecium gossypii (strain ATCC 10895 / CBS 109.51 / FGSC 9923 / NRRL Y-1056) (Yeast).